The sequence spans 307 residues: UAP56-interacting factor (307 aa).

Low complexity predominate over residues 1 to 25 (MSGFGAAALLSGSSAAAGTRSGSSD). Disordered stretches follow at residues 1-28 (MSGF…DSLE) and 41-85 (NKKE…KNHL). Residues 26 to 44 (SLEKIDMSLDDIIKLNKKE) carry the UAP56-binding motif motif. Polar residues predominate over residues 57–78 (LQQNRTQQFRTPGSKWGIQQQK).

The protein belongs to the UIF family. Widely expressed.

The protein resides in the nucleus. Its subcellular location is the nucleoplasm. The protein localises to the nucleus speckle. In terms of biological role, required for mRNA export from the nucleus to the cytoplasm. Acts as an adapter that uses the DDX39B/UAP56-NFX1 pathway to ensure efficient mRNA export and delivering to the nuclear pore. This Gallus gallus (Chicken) protein is UAP56-interacting factor (FYTTD1).